Here is a 187-residue protein sequence, read N- to C-terminus: UPF0301 protein CKO_04323 (187 aa).

Belongs to the UPF0301 (AlgH) family.

In Citrobacter koseri (strain ATCC BAA-895 / CDC 4225-83 / SGSC4696), this protein is UPF0301 protein CKO_04323.